A 241-amino-acid polypeptide reads, in one-letter code: NAD-dependent protein deacetylase 2 (241 aa).

In terms of domain architecture, Deacetylase sirtuin-type spans 1–241; that stretch reads MTGKPLVAIL…ALPALLRGLG (241 aa). NAD(+) contacts are provided by Ala13, Thr17, Arg25, Gln92, Val94, Asp95, and His112. Nicotinamide is bound by residues Val94 and Asp95. His112 functions as the Proton acceptor in the catalytic mechanism. The Zn(2+) site is built by Cys120, Cys123, Cys145, and Cys148. The NAD(+) site is built by Thr186, Ser187, Asn211, and Ile229.

This sequence belongs to the sirtuin family. Class U subfamily. Zn(2+) serves as cofactor.

The protein resides in the cytoplasm. The enzyme catalyses N(6)-acetyl-L-lysyl-[protein] + NAD(+) + H2O = 2''-O-acetyl-ADP-D-ribose + nicotinamide + L-lysyl-[protein]. Functionally, NAD-dependent protein deacetylase which modulates the activities of several enzymes which are inactive in their acetylated form. The sequence is that of NAD-dependent protein deacetylase 2 from Streptomyces coelicolor (strain ATCC BAA-471 / A3(2) / M145).